We begin with the raw amino-acid sequence, 80 residues long: Acyl carrier protein (80 aa).

The region spanning 4–79 is the Carrier domain; it reads EEIFNKIKDL…DAVSYIKSHQ (76 aa). Ser39 is subject to O-(pantetheine 4'-phosphoryl)serine.

The protein belongs to the acyl carrier protein (ACP) family. In terms of processing, 4'-phosphopantetheine is transferred from CoA to a specific serine of apo-ACP by AcpS. This modification is essential for activity because fatty acids are bound in thioester linkage to the sulfhydryl of the prosthetic group.

Its subcellular location is the cytoplasm. Its pathway is lipid metabolism; fatty acid biosynthesis. In terms of biological role, carrier of the growing fatty acid chain in fatty acid biosynthesis. The sequence is that of Acyl carrier protein from Lactobacillus acidophilus (strain ATCC 700396 / NCK56 / N2 / NCFM).